Consider the following 329-residue polypeptide: Cytochrome f (329 aa).

The N-terminal stretch at 1 to 44 (MKRNIIFLVIHQFENLTMKKKQNIFFIFLLTVFFNFTVNSNVSA) is a signal peptide. Heme is bound by residues Tyr45, Cys65, Cys68, and His69. The chain crosses the membrane as a helical span at residues 295-315 (VQGLIIFLITIFITQLFLVLK).

The protein belongs to the cytochrome f family. As to quaternary structure, the 4 large subunits of the cytochrome b6-f complex are cytochrome b6, subunit IV (17 kDa polypeptide, petD), cytochrome f and the Rieske protein, while the 4 small subunits are PetG, PetL, PetM and PetN. The complex functions as a dimer. The cofactor is heme.

The protein localises to the plastid. It localises to the chloroplast thylakoid membrane. Functionally, component of the cytochrome b6-f complex, which mediates electron transfer between photosystem II (PSII) and photosystem I (PSI), cyclic electron flow around PSI, and state transitions. The chain is Cytochrome f from Tupiella akineta (Green alga).